Here is a 245-residue protein sequence, read N- to C-terminus: Orotidine 5'-phosphate decarboxylase (245 aa).

Residues Asp22, Lys44, 71-80 (DLKFHDIPNT), Thr131, Arg192, Gln201, Gly221, and Arg222 each bind substrate. The active-site Proton donor is Lys73.

This sequence belongs to the OMP decarboxylase family. Type 1 subfamily. As to quaternary structure, homodimer.

The catalysed reaction is orotidine 5'-phosphate + H(+) = UMP + CO2. It participates in pyrimidine metabolism; UMP biosynthesis via de novo pathway; UMP from orotate: step 2/2. In terms of biological role, catalyzes the decarboxylation of orotidine 5'-monophosphate (OMP) to uridine 5'-monophosphate (UMP). The protein is Orotidine 5'-phosphate decarboxylase of Shigella boydii serotype 18 (strain CDC 3083-94 / BS512).